The primary structure comprises 244 residues: Ribonuclease PH (244 aa).

Residues Arg-86 and 124-126 each bind phosphate; that span reads GTR.

It belongs to the RNase PH family. As to quaternary structure, homohexameric ring arranged as a trimer of dimers.

It carries out the reaction tRNA(n+1) + phosphate = tRNA(n) + a ribonucleoside 5'-diphosphate. Its function is as follows. Phosphorolytic 3'-5' exoribonuclease that plays an important role in tRNA 3'-end maturation. Removes nucleotide residues following the 3'-CCA terminus of tRNAs; can also add nucleotides to the ends of RNA molecules by using nucleoside diphosphates as substrates, but this may not be physiologically important. Probably plays a role in initiation of 16S rRNA degradation (leading to ribosome degradation) during starvation. This Glaesserella parasuis serovar 5 (strain SH0165) (Haemophilus parasuis) protein is Ribonuclease PH.